The chain runs to 116 residues: Probable early E4 11 kDa protein (116 aa).

This is Probable early E4 11 kDa protein from Human adenovirus A serotype 12 (HAdV-12).